Here is a 275-residue protein sequence, read N- to C-terminus: Ribosomal RNA small subunit methyltransferase A (275 aa).

S-adenosyl-L-methionine contacts are provided by Asn28, Leu30, Gly55, Glu77, Asp103, and Asn123.

Belongs to the class I-like SAM-binding methyltransferase superfamily. rRNA adenine N(6)-methyltransferase family. RsmA subfamily.

Its subcellular location is the cytoplasm. The catalysed reaction is adenosine(1518)/adenosine(1519) in 16S rRNA + 4 S-adenosyl-L-methionine = N(6)-dimethyladenosine(1518)/N(6)-dimethyladenosine(1519) in 16S rRNA + 4 S-adenosyl-L-homocysteine + 4 H(+). In terms of biological role, specifically dimethylates two adjacent adenosines (A1518 and A1519) in the loop of a conserved hairpin near the 3'-end of 16S rRNA in the 30S particle. May play a critical role in biogenesis of 30S subunits. The polypeptide is Ribosomal RNA small subunit methyltransferase A (Rhizobium etli (strain CIAT 652)).